Consider the following 267-residue polypeptide: NADP-dependent mannitol dehydrogenase (267 aa).

NADP(+) is bound by residues N108 and K141. S160 serves as the catalytic Proton donor. Positions 175, 179, 207, and 209 each coordinate NADP(+). Y175 acts as the Proton acceptor in catalysis. The Lowers pKa of active site Tyr role is filled by K179.

The protein belongs to the short-chain dehydrogenases/reductases (SDR) family. Exists as monomer, dimer and tetramer.

The catalysed reaction is D-mannitol + NADP(+) = D-fructose + NADPH + H(+). Interconverts D-mannitol and D-fructose. Not active with fructose 6-phosphate or NADH. The chain is NADP-dependent mannitol dehydrogenase from Davidiella tassiana (Mycosphaerella tassiana).